We begin with the raw amino-acid sequence, 1151 residues long: PPi-type phosphoenolpyruvate carboxykinase 1 (1151 aa).

Residues 1083 to 1129 (RQKLEVAKLNKDLAYLNKTIAEKPRLAETLNKQIAAVKEELQYVSSE) adopt a coiled-coil conformation.

It belongs to the PPi-type phosphoenolpyruvate carboxykinase family. In terms of assembly, monomer and trimer; forms heterotrimers with PEPCK2 and PEPCK3.

It is found in the cytoplasm. The protein resides in the cytosol. The catalysed reaction is oxaloacetate + diphosphate = phosphoenolpyruvate + phosphate + CO2. Functionally, inorganic pyrophosphate (PPi)-dependent phosphoenolpyruvate carboxykinase, which regulates the carbon flow of the central metabolism by fixing CO(2) to phosphoenolpyruvate to produce oxaloacetate. Can also produce pyruvate and diphosphate from phosphoenolpyruvate and phosphate. The sequence is that of PPi-type phosphoenolpyruvate carboxykinase 1 from Entamoeba histolytica (strain ATCC 30459 / HM-1:IMSS / ABRM).